A 108-amino-acid polypeptide reads, in one-letter code: Small ribosomal subunit protein uS17 (108 aa).

It belongs to the universal ribosomal protein uS17 family. Part of the 30S ribosomal subunit.

One of the primary rRNA binding proteins, it binds specifically to the 5'-end of 16S ribosomal RNA. The sequence is that of Small ribosomal subunit protein uS17 from Methanocorpusculum labreanum (strain ATCC 43576 / DSM 4855 / Z).